Here is a 189-residue protein sequence, read N- to C-terminus: Large ribosomal subunit protein uL5 (189 aa).

It belongs to the universal ribosomal protein uL5 family. Part of the 50S ribosomal subunit; part of the 5S rRNA/L5/L18/L25 subcomplex. Contacts the 5S rRNA and the P site tRNA. Forms a bridge to the 30S subunit in the 70S ribosome.

This is one of the proteins that bind and probably mediate the attachment of the 5S RNA into the large ribosomal subunit, where it forms part of the central protuberance. In the 70S ribosome it contacts protein S13 of the 30S subunit (bridge B1b), connecting the 2 subunits; this bridge is implicated in subunit movement. Contacts the P site tRNA; the 5S rRNA and some of its associated proteins might help stabilize positioning of ribosome-bound tRNAs. The polypeptide is Large ribosomal subunit protein uL5 (Parafrankia sp. (strain EAN1pec)).